A 1029-amino-acid polypeptide reads, in one-letter code: Beta-galactosidase (1029 aa).

Positions 108 and 207 each coordinate substrate. Na(+) is bound at residue Asp207. Mg(2+)-binding residues include Glu422, His424, and Glu467. Substrate is bound by residues Glu467 and 543-546 (EYAH). The active-site Proton donor is the Glu467. Catalysis depends on Glu543, which acts as the Nucleophile. Position 603 (Asn603) interacts with Mg(2+). The Na(+) site is built by Phe607 and Asn610. Residues Asn610 and Trp1005 each coordinate substrate.

The protein belongs to the glycosyl hydrolase 2 family. As to quaternary structure, homotetramer. The cofactor is Mg(2+). It depends on Na(+) as a cofactor.

The enzyme catalyses Hydrolysis of terminal non-reducing beta-D-galactose residues in beta-D-galactosides.. The chain is Beta-galactosidase from Escherichia coli.